The following is a 360-amino-acid chain: D-alanine--D-alanine ligase (360 aa).

An ATP-grasp domain is found at 139-344 (KDVFAQAGLA…YPELIEKLVS (206 aa)). ATP is bound at residue 172–227 (EQVLGYPCFVKPANMGSSVGISKCRSKEELQTAFDLAFQYDRRVVVEEGVVGREIE). Asp298, Glu311, and Asn313 together coordinate Mg(2+).

The protein belongs to the D-alanine--D-alanine ligase family. The cofactor is Mg(2+). Mn(2+) serves as cofactor.

The protein resides in the cytoplasm. The enzyme catalyses 2 D-alanine + ATP = D-alanyl-D-alanine + ADP + phosphate + H(+). It functions in the pathway cell wall biogenesis; peptidoglycan biosynthesis. Its function is as follows. Cell wall formation. This chain is D-alanine--D-alanine ligase, found in Bacillus pumilus (strain SAFR-032).